The chain runs to 640 residues: tRNA uridine 5-carboxymethylaminomethyl modification enzyme MnmG (640 aa).

9–14 (GGGHAG) is an FAD binding site. Residue 289–303 (GPRYCPSIEDKINKF) participates in NAD(+) binding.

The protein belongs to the MnmG family. Homodimer. Heterotetramer of two MnmE and two MnmG subunits. FAD serves as cofactor.

It is found in the cytoplasm. In terms of biological role, NAD-binding protein involved in the addition of a carboxymethylaminomethyl (cmnm) group at the wobble position (U34) of certain tRNAs, forming tRNA-cmnm(5)s(2)U34. The protein is tRNA uridine 5-carboxymethylaminomethyl modification enzyme MnmG of Campylobacter hominis (strain ATCC BAA-381 / DSM 21671 / CCUG 45161 / LMG 19568 / NCTC 13146 / CH001A).